The sequence spans 200 residues: Urease accessory protein UreE (200 aa).

Residues 171–200 (HHGHAHPHPHDHDHQHGPGCAHGRHGHDHH) are disordered.

Belongs to the UreE family.

It localises to the cytoplasm. Functionally, involved in urease metallocenter assembly. Binds nickel. Probably functions as a nickel donor during metallocenter assembly. In Burkholderia vietnamiensis (strain G4 / LMG 22486) (Burkholderia cepacia (strain R1808)), this protein is Urease accessory protein UreE.